Consider the following 280-residue polypeptide: uncharacterized protein (280 aa).

Residue 3-29 (KKIAIVTGASSGFGLLAAVKLARSFFV) participates in NADP(+) binding. Ser-139 serves as a coordination point for substrate. Residue Tyr-152 is the Proton acceptor of the active site.

The protein belongs to the short-chain dehydrogenases/reductases (SDR) family.

This is an uncharacterized protein from Bacillus subtilis (strain 168).